Consider the following 310-residue polypeptide: tRNA-splicing endonuclease subunit Sen34 (310 aa).

Residues glycine 119–proline 177 form a disordered region. Residues glutamate 128–alanine 144 are compositionally biased toward low complexity. Residues tyrosine 247, histidine 255, and lysine 286 contribute to the active site.

This sequence belongs to the tRNA-intron endonuclease family. In terms of assembly, tRNA splicing endonuclease is a heterotetramer composed of TSEN2, TSEN15, TSEN34/LENG5 and TSEN54. tRNA splicing endonuclease complex also contains proteins of the pre-mRNA 3'-end processing machinery such as CLP1, CPSF1, CPSF4 and CSTF2.

It localises to the nucleus. The protein resides in the nucleolus. It carries out the reaction pretRNA = a 3'-half-tRNA molecule with a 5'-OH end + a 5'-half-tRNA molecule with a 2',3'-cyclic phosphate end + an intron with a 2',3'-cyclic phosphate and a 5'-hydroxyl terminus.. Its function is as follows. Constitutes one of the two catalytic subunit of the tRNA-splicing endonuclease complex, a complex responsible for identification and cleavage of the splice sites in pre-tRNA. It cleaves pre-tRNA at the 5'- and 3'-splice sites to release the intron. The products are an intron and two tRNA half-molecules bearing 2',3'-cyclic phosphate and 5'-OH termini. There are no conserved sequences at the splice sites, but the intron is invariably located at the same site in the gene, placing the splice sites an invariant distance from the constant structural features of the tRNA body. It probably carries the active site for 3'-splice site cleavage. The tRNA splicing endonuclease is also involved in mRNA processing via its association with pre-mRNA 3'-end processing factors, establishing a link between pre-tRNA splicing and pre-mRNA 3'-end formation, suggesting that the endonuclease subunits function in multiple RNA-processing events. This Homo sapiens (Human) protein is tRNA-splicing endonuclease subunit Sen34 (TSEN34).